We begin with the raw amino-acid sequence, 150 residues long: Urease accessory protein UreE (150 aa).

Belongs to the UreE family.

The protein localises to the cytoplasm. In terms of biological role, involved in urease metallocenter assembly. Binds nickel. Probably functions as a nickel donor during metallocenter assembly. This chain is Urease accessory protein UreE, found in Staphylococcus saprophyticus subsp. saprophyticus (strain ATCC 15305 / DSM 20229 / NCIMB 8711 / NCTC 7292 / S-41).